Consider the following 674-residue polypeptide: Sodium/myo-inositol cotransporter 2 (674 aa).

Residues 1–27 (MESSPSSPQPTQSDPLAVFPQRTLEPA) lie on the Extracellular side of the membrane. A helical membrane pass occupies residues 28–48 (DIAVLVLYFLFVLAVGLWSTV). The Cytoplasmic portion of the chain corresponds to 49–56 (KTRRDTVK). A helical transmembrane segment spans residues 57–77 (GYFLAGGDMVWWPVGASLFAS). Residues 78–102 (NVGSGHFVGLAGSGAAAGLSVTAYE) lie on the Extracellular side of the membrane. Residues 103 to 123 (FNGIFSVLMLAWIFLPIYIAG) traverse the membrane as a helical segment. Topologically, residues 124–140 (QVTTMPEYLRKRFGGSR) are cytoplasmic. Residues 141–161 (IPITLAVLYLFIYIFTKISVD) traverse the membrane as a helical segment. The Extracellular portion of the chain corresponds to 162–180 (MYAGAIFIQQSLHLNLYLA). Residues 181 to 201 (IVGLLAITALYTIAGGLAAVI) traverse the membrane as a helical segment. The Cytoplasmic segment spans residues 202 to 208 (YTDALQT). A helical transmembrane segment spans residues 209–229 (LIMLIGALTLMGYSFAAVGGM). The Extracellular portion of the chain corresponds to 230–272 (EGLKEKYFLALASNRSGNSSCGLPREDAFHIFRDPLTSDLPWP). The helical transmembrane segment at 273-293 (GILFGMSIPSLWYWCTDQVIV) threads the bilayer. Topologically, residues 294 to 308 (QRTLAAKNLSHAKGG) are cytoplasmic. The helical transmembrane segment at 309-329 (SLMAAYLKVLPLFIMVFPGMV) threads the bilayer. Residues 330–374 (SRVLFPDQVACADPEICQKVCSNPAGCSDIAYPKLVLELLPMGLR) are Extracellular-facing. Residues 375–397 (GLMMAVMVAALMSSLTSIFNSAS) traverse the membrane as a helical segment. The Cytoplasmic segment spans residues 398–418 (TIFTMDLWNHLRPRASERELM). The helical transmembrane segment at 419–439 (IVGRVFVLLLVLVSILWIPVV) threads the bilayer. Residues 440 to 446 (QASQGGQ) lie on the Extracellular side of the membrane. A helical membrane pass occupies residues 447–467 (LFIYIQSISSYLQPPVAVVFI). The Cytoplasmic segment spans residues 468–479 (MGCFWKRTNEKG). A helical transmembrane segment spans residues 480–500 (AFSGLILGLLLGLVRLVLDFI). The Extracellular portion of the chain corresponds to 501 to 518 (YPQPRCDQPDERPAVVRD). Residues 519–539 (VHYLYFSMILSSVTLVTVSTV) traverse the membrane as a helical segment. Residues 540-653 (SWCTAPPTQE…SLEEIPLVKT (114 aa)) are Cytoplasmic-facing. The helical transmembrane segment at 654–674 (LLDINLIVCISCAIFLWGYFA) threads the bilayer.

This sequence belongs to the sodium:solute symporter (SSF) (TC 2.A.21) family.

The protein localises to the membrane. The protein resides in the apical cell membrane. It carries out the reaction myo-inositol(out) + 2 Na(+)(out) = myo-inositol(in) + 2 Na(+)(in). The enzyme catalyses 1D-chiro-inositol(out) + 2 Na(+)(out) = 1D-chiro-inositol(in) + 2 Na(+)(in). The catalysed reaction is D-glucose(out) + 2 Na(+)(out) = D-glucose(in) + 2 Na(+)(in). It catalyses the reaction D-xylose(out) + 2 Na(+)(out) = D-xylose(in) + 2 Na(+)(in). Its activity is regulated as follows. MI transport activity inhibited by D-chiro-inositol (DCI), phlorizin (Pz) and sodium (Na(+)). Insulin increases D-chiro-inositol uptake. Its function is as follows. Involved in the sodium-dependent cotransport of myo-inositol (MI) with a Na(+):MI stoichiometry of 2:1. Exclusively responsible for apical MI transport and absorption in intestine. Can also transport D-chiro-inositol (DCI) but not L-fucose. Exhibits stereospecific cotransport of both D-glucose and D-xylose. May induce apoptosis through the TNF-alpha, PDCD1 pathway. May play a role in the regulation of MI concentration in serum, involving reabsorption in at least the proximal tubule of the kidney. The protein is Sodium/myo-inositol cotransporter 2 of Sus scrofa (Pig).